Consider the following 551-residue polypeptide: uncharacterized protein (551 aa).

Polar residues predominate over residues 1–11 (MRRVSLPNQLN). 2 disordered regions span residues 1-22 (MRRV…TRGE) and 523-551 (CDPT…QAFH). The span at 12 to 22 (ETRRRSPTRGE) shows a compositional bias: basic and acidic residues. Low complexity predominate over residues 537–551 (QQPQQQQQQQQQAFH).

The protein to Synechocystis PCC 6803 sll0335 and to M.tuberculosis Rv2567.

This is an uncharacterized protein from Mycobacterium bovis (strain ATCC BAA-935 / AF2122/97).